A 77-amino-acid chain; its full sequence is Translation initiation factor IF-1, chloroplastic (77 aa).

The S1-like domain occupies Met-1 to Arg-71.

The protein belongs to the IF-1 family. In terms of assembly, component of the 30S ribosomal translation pre-initiation complex which assembles on the 30S ribosome in the order IF-2 and IF-3, IF-1 and N-formylmethionyl-tRNA(fMet); mRNA recruitment can occur at any time during PIC assembly.

It is found in the plastid. It localises to the chloroplast. In terms of biological role, one of the essential components for the initiation of protein synthesis. Stabilizes the binding of IF-2 and IF-3 on the 30S subunit to which N-formylmethionyl-tRNA(fMet) subsequently binds. Helps modulate mRNA selection, yielding the 30S pre-initiation complex (PIC). Upon addition of the 50S ribosomal subunit IF-1, IF-2 and IF-3 are released leaving the mature 70S translation initiation complex. The chain is Translation initiation factor IF-1, chloroplastic from Cabomba caroliniana (Carolina fanwort).